The following is a 448-amino-acid chain: Exodeoxyribonuclease 7 large subunit (448 aa).

The protein belongs to the XseA family. In terms of assembly, heterooligomer composed of large and small subunits.

It is found in the cytoplasm. It catalyses the reaction Exonucleolytic cleavage in either 5'- to 3'- or 3'- to 5'-direction to yield nucleoside 5'-phosphates.. Functionally, bidirectionally degrades single-stranded DNA into large acid-insoluble oligonucleotides, which are then degraded further into small acid-soluble oligonucleotides. This Tolumonas auensis (strain DSM 9187 / NBRC 110442 / TA 4) protein is Exodeoxyribonuclease 7 large subunit.